The chain runs to 439 residues: Acyl-coenzyme A thioesterase 10, mitochondrial (439 aa).

A mitochondrion-targeting transit peptide spans 1 to 21; it reads MKRAAMRLWTLNKGLLTHGRG. 2 HotDog ACOT-type domains span residues 85–209 and 289–401; these read SYIE…QDSE and EDTK…EKEV.

This sequence belongs to the acyl coenzyme A hydrolase family.

It localises to the mitochondrion. In terms of biological role, catalyzes the hydrolysis of acyl-CoAs into free fatty acids and coenzyme A (CoASH), regulating their respective intracellular levels. Active on long chain acyl-CoAs. The protein is Acyl-coenzyme A thioesterase 10, mitochondrial of Mus musculus (Mouse).